The sequence spans 649 residues: DNA ligase (649 aa).

NAD(+) contacts are provided by residues 62 to 66 (DSTYD) and 104 to 105 (ST). Residue Lys142 is the N6-AMP-lysine intermediate of the active site. 3 residues coordinate NAD(+): Arg158, Glu189, and Lys301. Residues Cys389, Cys392, Cys405, and Cys411 each coordinate Zn(2+). A BRCT domain is found at 569 to 649 (PGETPVFGKI…LDYLALISTY (81 aa)).

Belongs to the NAD-dependent DNA ligase family. LigA subfamily. Requires Mg(2+) as cofactor. It depends on Mn(2+) as a cofactor.

The catalysed reaction is NAD(+) + (deoxyribonucleotide)n-3'-hydroxyl + 5'-phospho-(deoxyribonucleotide)m = (deoxyribonucleotide)n+m + AMP + beta-nicotinamide D-nucleotide.. DNA ligase that catalyzes the formation of phosphodiester linkages between 5'-phosphoryl and 3'-hydroxyl groups in double-stranded DNA using NAD as a coenzyme and as the energy source for the reaction. It is essential for DNA replication and repair of damaged DNA. This is DNA ligase from Psychromonas ingrahamii (strain DSM 17664 / CCUG 51855 / 37).